The sequence spans 1634 residues: Leucine-rich repeat-containing protein 37A3 (1634 aa).

The N-terminal stretch at 1-35 (MTSAQCPALACVMSPLRFWGPWPLLMWQLLWLLVK) is a signal peptide. The Extracellular portion of the chain corresponds to 36–1581 (EAQPLEWVKD…ELPGYGYTKK (1546 aa)). 5 disordered regions span residues 53 to 104 (PLGP…ESTE), 129 to 154 (SQQD…KKDP), 172 to 531 (TPQS…VVVA), 619 to 642 (PEPT…KHPE), and 758 to 777 (EPTT…APRP). An LRR 1 repeat occupies 137–160 (LSPQERLPVSPKKLKKDPAQRWSL). 2 stretches are compositionally biased toward polar residues: residues 172-189 (TPQS…STDT) and 223-237 (ETQN…QSSS). LRR repeat units lie at residues 230-253 (LEDI…LEEE) and 267-290 (ESSM…EDQA). The span at 238-249 (LQQEAPAQLPQL) shows a compositional bias: low complexity. Asn296 carries an N-linked (GlcNAc...) asparagine glycan. Residues 307 to 326 (TITSEPTNETESSQAQQETP) show a composition bias toward polar residues. Positions 358 to 368 (SEQQQPVQPSE) are enriched in low complexity. Residues 433 to 446 (LVHQEATTRLSGSG) are compositionally biased toward polar residues. Residues 482 to 493 (SPEPINNENPSP) are compositionally biased toward low complexity. Over residues 760–770 (TTETGHSTALE) the composition is skewed to polar residues. LRR repeat units follow at residues 864–887 (NGTF…VWKA), 888–911 (YSWT…SFEG), 912–935 (LLSL…TFEP), 937–959 (PFLK…TFQA), 963–987 (MQFL…LFKL), and 1002–1027 (LTTL…MACC). Asn1079 carries an N-linked (GlcNAc...) asparagine glycan. LRR repeat units follow at residues 1124-1146 (LPYF…KLPT) and 1151-1176 (LAKI…SIQK). 2 stretches are compositionally biased toward basic and acidic residues: residues 1181-1191 (EVGRQSIRREQ) and 1201-1216 (AEEK…ELKQ). Disordered stretches follow at residues 1181–1227 (EVGR…EKLA) and 1306–1329 (RFHK…KVRK). An LRR 12 repeat occupies 1359-1384 (FSSLRDLSPQENPFLEVSAPSEHFIE). Residues 1582-1602 (LILALIVTGILTILIILLCLI) traverse the membrane as a helical segment. The Cytoplasmic portion of the chain corresponds to 1603-1634 (EICCHRRSLQEDEEGFSRDSEAPTEEESEALP). Residues 1614 to 1634 (DEEGFSRDSEAPTEEESEALP) are disordered. The span at 1624–1634 (APTEEESEALP) shows a compositional bias: acidic residues.

It belongs to the LRRC37A family.

It is found in the membrane. This Homo sapiens (Human) protein is Leucine-rich repeat-containing protein 37A3 (LRRC37A3).